The sequence spans 191 residues: Protein G1-like1 (191 aa).

The segment at 1-29 is disordered; the sequence is MDMIGMASPAESPGGGGTARPSRYESQKR. An ALOG domain is found at 23–150; the sequence is RYESQKRRDW…ARGIAYEKKR (128 aa). The Nuclear localization signal signature appears at 148-152; the sequence is KKRRK. Positions 152–179 form a coiled coil; the sequence is KRAAASHTKQKQQQQQLVEQAAAAAEAH.

Belongs to the plant homeotic and developmental regulators ALOG protein family.

The protein resides in the nucleus. Functionally, probable transcription regulator that acts as a developmental regulator by promoting cell growth in response to light. The sequence is that of Protein G1-like1 from Oryza sativa subsp. indica (Rice).